The following is a 236-amino-acid chain: Mitochondrial inner membrane protease ATP23 (236 aa).

An a divalent metal cation-binding site is contributed by His136. The active site involves Glu137. His140 is an a divalent metal cation binding site.

The protein belongs to the peptidase M76 family.

It localises to the mitochondrion inner membrane. In terms of biological role, has a dual role in the assembly of mitochondrial ATPase. Acts as a protease that removes N-terminal residues of mitochondrial ATPase CF(0) subunit 6 at the intermembrane space side. Also involved in the correct assembly of the membrane-embedded ATPase CF(0) particle, probably mediating association of subunit 6 with the subunit 9 ring. The protein is Mitochondrial inner membrane protease ATP23 (ATP23) of Debaryomyces hansenii (strain ATCC 36239 / CBS 767 / BCRC 21394 / JCM 1990 / NBRC 0083 / IGC 2968) (Yeast).